The following is a 535-amino-acid chain: MASLVAYDDSDSETEADPARSGDAAGQISDASGMSRPSGMGFASSTVGVTKEGAQHTGNSPNEDPGMQRLPLARLWRSDPGSCPSQRLQWPSKEPDTTFPPSEPPRPSLWMSRAPVGHVPLAAACLKPLKPAWDVLKPSHDQSTFESTAGNASSSQRKRGEDCVLPYIPKRLRQLQALNPEAGGGKDGEPPGPPAGCAPAPLCVAPTVSEFIQPYLNSQYRETTVPKKVLFHLRGHRGPVNSIQWCPVFCKSHMLLSASMDKTFKVWNAVDSGHCLQTYSVHSEAVRAARWSPCGRRILSGGFDFALHLTDLETGTQVFSGQSDFRVTTLKFHPKDHNVFLCGGFSSEIKAWDMRTGKVVKGYKATIQQTLDILFLQEGSEFLSSTDASTRDSADRTIIAWDFRTAAKISNQIFHERYTCPSLALHPREPVFLAQTNGNYLALFSSVWPYRMSRRRRYEGHKVEGYAVGCECSPCGDLLVTGSADGRVLMFSFRTASRACTLQGHTQACLGTTYHPVLPSVLGTCSWGGDIKIWH.

2 disordered regions span residues 1-108 (MASL…PRPS) and 141-160 (DQST…RKRG). Over residues 141–155 (DQSTFESTAGNASSS) the composition is skewed to polar residues. WD repeat units lie at residues 235–277 (GHRG…HCLQ), 281–320 (VHSE…QVFS), 321–362 (GQSD…VVKG), 365–411 (ATIQ…KISN), 415–454 (HERY…RMSR), 460–501 (GHKV…RACT), and 504–535 (GHTQ…KIWH).

The chain is WD repeat-containing protein 25 (Wdr25) from Mus musculus (Mouse).